A 466-amino-acid chain; its full sequence is tRNA-2-methylthio-N(6)-dimethylallyladenosine synthase (466 aa).

One can recognise an MTTase N-terminal domain in the interval 2–118; it reads KRFYIHTIGC…LPGHIQAVAH (117 aa). Residues cysteine 11, cysteine 47, cysteine 81, cysteine 157, cysteine 161, and cysteine 164 each coordinate [4Fe-4S] cluster. The 230-residue stretch at 143–372 folds into the Radical SAM core domain; it reads DSSGVTGFIT…LELQNRITAE (230 aa). The 79-residue stretch at 375 to 453 folds into the TRAM domain; it reads RALEGRVEQV…AHSLSGIAVG (79 aa).

This sequence belongs to the methylthiotransferase family. MiaB subfamily. As to quaternary structure, monomer. Requires [4Fe-4S] cluster as cofactor.

It is found in the cytoplasm. It carries out the reaction N(6)-dimethylallyladenosine(37) in tRNA + (sulfur carrier)-SH + AH2 + 2 S-adenosyl-L-methionine = 2-methylsulfanyl-N(6)-dimethylallyladenosine(37) in tRNA + (sulfur carrier)-H + 5'-deoxyadenosine + L-methionine + A + S-adenosyl-L-homocysteine + 2 H(+). Catalyzes the methylthiolation of N6-(dimethylallyl)adenosine (i(6)A), leading to the formation of 2-methylthio-N6-(dimethylallyl)adenosine (ms(2)i(6)A) at position 37 in tRNAs that read codons beginning with uridine. The protein is tRNA-2-methylthio-N(6)-dimethylallyladenosine synthase of Desulfosudis oleivorans (strain DSM 6200 / JCM 39069 / Hxd3) (Desulfococcus oleovorans).